A 488-amino-acid chain; its full sequence is MTEPTQLWGGRFKSGPSEALANLSRAPRSYFRLYKEDIAGSRAHASELKRAGVLDESEFSAIRAALEGIEADVGAGREEPIAADEDLHTFLERLLMARLGTLGGKLRAGRSRNDQTANNTRLYLRRMARELSQGVIAIEEALTEQASRHTETVMPGFTHLQPAQPVVLGHHLMAHAQSLLRDLQRFADWDRRFDRSPLGAAALAGSGIARRPDLSAIDLGYSAACENSIDAVAARDHVAEFLFICSLVAVDLSRLAEEICLWSSKQFSWVRLHDSYSTGSSIMPQKKNPDVAELTRGMSGTLIGNIAGFLATMKAMPLAYNRDLAEDKRSLFETIDVLELVLPAFAGMVGTLEFDVEKLREEAPKGFTLATEVADWLVGRDVPFAEAHEITGAVVRFCEERGHDLAGLTAEDLPGIDPRLHPEMLAALVLEKALASRNGYGATAPEKVREQIARFETALAECCAFAGGPIGGGAFAGAKDGAEEARRR.

It belongs to the lyase 1 family. Argininosuccinate lyase subfamily.

The protein localises to the cytoplasm. It catalyses the reaction 2-(N(omega)-L-arginino)succinate = fumarate + L-arginine. The protein operates within amino-acid biosynthesis; L-arginine biosynthesis; L-arginine from L-ornithine and carbamoyl phosphate: step 3/3. This Rhizobium meliloti (strain 1021) (Ensifer meliloti) protein is Argininosuccinate lyase 2.